The following is a 129-amino-acid chain: Small ribosomal subunit protein uS11 (129 aa).

It belongs to the universal ribosomal protein uS11 family. As to quaternary structure, part of the 30S ribosomal subunit. Interacts with proteins S7 and S18. Binds to IF-3.

Located on the platform of the 30S subunit, it bridges several disparate RNA helices of the 16S rRNA. Forms part of the Shine-Dalgarno cleft in the 70S ribosome. This chain is Small ribosomal subunit protein uS11, found in Marinobacter nauticus (strain ATCC 700491 / DSM 11845 / VT8) (Marinobacter aquaeolei).